The sequence spans 863 residues: Adenosylcobalamin biosynthesis bifunctional protein CobDQ (863 aa).

A putative threonine-phosphate decarboxylase region spans residues 1-373 (MNLPEHGGNL…LKSRKKTPSI (373 aa)). Residues 6–7 (HG), asparagine 30, and asparagine 159 each bind O-phospho-L-threonine. N6-(pyridoxal phosphate)lysine is present on lysine 214. 2 residues coordinate O-phospho-L-threonine: arginine 323 and arginine 337. The segment at 374-863 (MFQGTASNVG…NLIYRKLGLG (490 aa)) is cobyric acid synthase. In terms of domain architecture, GATase cobBQ-type spans 622–810 (RLDVVLIDIP…IHGIFDKDEF (189 aa)). Cysteine 704 serves as the catalytic Nucleophile. Residue histidine 802 is part of the active site.

The protein in the N-terminal section; belongs to the class-II pyridoxal-phosphate-dependent aminotransferase family. It in the C-terminal section; belongs to the CobB/CobQ family. CobQ subfamily. Pyridoxal 5'-phosphate serves as cofactor.

The enzyme catalyses O-phospho-L-threonine + H(+) = (R)-1-aminopropan-2-yl phosphate + CO2. The protein operates within cofactor biosynthesis; adenosylcobalamin biosynthesis. Catalyzes two activities which are involved in the adenosylcobalamin biosynthesis: decarboxylates L-threonine-O-3-phosphate to yield (R)-1-amino-2-propanol O-2-phosphate, the precursor for the linkage between the nucleotide loop and the corrin ring in cobalamin, and catalyzes amidations at positions B, D, E, and G on adenosylcobyrinic A,C-diamide. NH(2) groups are provided by glutamine, and one molecule of ATP is hydrogenolyzed for each amidation. The sequence is that of Adenosylcobalamin biosynthesis bifunctional protein CobDQ (cobDQ) from Leptospira interrogans serogroup Icterohaemorrhagiae serovar Lai (strain 56601).